Consider the following 426-residue polypeptide: 3-phosphoshikimate 1-carboxyvinyltransferase (426 aa).

Residues lysine 22, serine 23, and arginine 27 each contribute to the 3-phosphoshikimate site. Residue lysine 22 coordinates phosphoenolpyruvate. Phosphoenolpyruvate is bound by residues glycine 96 and arginine 124. Residues serine 170, serine 171, glutamine 172, serine 198, aspartate 314, asparagine 337, and lysine 341 each coordinate 3-phosphoshikimate. Residue glutamine 172 participates in phosphoenolpyruvate binding. Catalysis depends on aspartate 314, which acts as the Proton acceptor. Phosphoenolpyruvate is bound by residues arginine 345, arginine 387, and lysine 412.

Belongs to the EPSP synthase family. Monomer.

The protein resides in the cytoplasm. It carries out the reaction 3-phosphoshikimate + phosphoenolpyruvate = 5-O-(1-carboxyvinyl)-3-phosphoshikimate + phosphate. It functions in the pathway metabolic intermediate biosynthesis; chorismate biosynthesis; chorismate from D-erythrose 4-phosphate and phosphoenolpyruvate: step 6/7. Its function is as follows. Catalyzes the transfer of the enolpyruvyl moiety of phosphoenolpyruvate (PEP) to the 5-hydroxyl of shikimate-3-phosphate (S3P) to produce enolpyruvyl shikimate-3-phosphate and inorganic phosphate. This Shewanella baltica (strain OS155 / ATCC BAA-1091) protein is 3-phosphoshikimate 1-carboxyvinyltransferase.